Reading from the N-terminus, the 195-residue chain is ATP-dependent Clp protease proteolytic subunit 1 (195 aa).

The Nucleophile role is filled by serine 96. Histidine 121 is a catalytic residue.

It belongs to the peptidase S14 family. Fourteen ClpP subunits assemble into 2 heptameric rings which stack back to back to give a disk-like structure with a central cavity, resembling the structure of eukaryotic proteasomes.

Its subcellular location is the cytoplasm. It carries out the reaction Hydrolysis of proteins to small peptides in the presence of ATP and magnesium. alpha-casein is the usual test substrate. In the absence of ATP, only oligopeptides shorter than five residues are hydrolyzed (such as succinyl-Leu-Tyr-|-NHMec, and Leu-Tyr-Leu-|-Tyr-Trp, in which cleavage of the -Tyr-|-Leu- and -Tyr-|-Trp bonds also occurs).. In terms of biological role, cleaves peptides in various proteins in a process that requires ATP hydrolysis. Has a chymotrypsin-like activity. Plays a major role in the degradation of misfolded proteins. In Prochlorococcus marinus (strain MIT 9312), this protein is ATP-dependent Clp protease proteolytic subunit 1.